The following is a 164-amino-acid chain: uncharacterized protein (164 aa).

The interval 144 to 164 (GFISPEKEHESEDMTSQSLVA) is disordered.

This is an uncharacterized protein from Synechocystis sp. (strain ATCC 27184 / PCC 6803 / Kazusa).